The primary structure comprises 413 residues: Protein MANNAN SYNTHESIS-RELATED (413 aa).

Topologically, residues 1 to 5 are cytoplasmic; sequence MNSME. A helical; Signal-anchor for type II membrane protein membrane pass occupies residues 6-26; sequence IRQAFAGLLTLSMFIMLGNMI. Residues 27 to 413 lie on the Lumenal side of the membrane; sequence KKDHFDYPAE…KNHLAYKCFC (387 aa). Asn207 carries N-linked (GlcNAc...) asparagine glycosylation. Substrate is bound at residue 255–257; it reads DLR.

It belongs to the glycosyltransferase GT106 family. In terms of tissue distribution, highly and specifically expressed in the endosperm.

The protein resides in the golgi apparatus membrane. It participates in glycan biosynthesis. Glycosyltransferase involved in mannan biosynthesis. The protein is Protein MANNAN SYNTHESIS-RELATED of Trigonella foenum-graecum (Fenugreek).